A 683-amino-acid chain; its full sequence is Leucine zipper putative tumor suppressor 2 homolog (683 aa).

Disordered stretches follow at residues 1–37, 82–107, and 262–320; these read MAAL…TMGS, YSSQ…NNGN, and MGHI…CDRS. 2 stretches are compositionally biased toward polar residues: residues 11–37 and 96–107; these read IDQN…TMGS and KPSTTTSGNNGN. Residues 290 to 308 are compositionally biased toward low complexity; that stretch reads SDSGRSSSSKSTGSLSGRG. Positions 324-665 form a coiled coil; it reads SDEILIRELE…LELEARELDE (342 aa).

The protein belongs to the LZTS2 family.

The protein localises to the cytoplasm. It localises to the cytoskeleton. It is found in the microtubule organizing center. Its subcellular location is the centrosome. Negative regulator of katanin-mediated microtubule severing and release from the centrosome. Required for central spindle formation and the completion of cytokinesis. Negative regulator of the Wnt signaling pathway. Represses beta-catenin-mediated transcriptional activation by promoting the nuclear exclusion of beta-catenin. In Xenopus tropicalis (Western clawed frog), this protein is Leucine zipper putative tumor suppressor 2 homolog (lzts2).